The chain runs to 313 residues: Protein FixB (313 aa).

255–283 serves as a coordination point for FAD; the sequence is LYLAVGISGQIQHMVGANASQTIFAINKD.

This sequence belongs to the ETF alpha-subunit/FixB family. As to quaternary structure, heterodimer of FixA and FixB.

It participates in amine and polyamine metabolism; carnitine metabolism. Required for anaerobic carnitine reduction. May bring reductant to CaiA. This Escherichia coli O7:K1 (strain IAI39 / ExPEC) protein is Protein FixB.